A 205-amino-acid polypeptide reads, in one-letter code: Methylthioribulose-1-phosphate dehydratase (205 aa).

Residues H96 and H98 each coordinate Zn(2+).

Belongs to the aldolase class II family. MtnB subfamily. Zn(2+) is required as a cofactor.

It carries out the reaction 5-(methylsulfanyl)-D-ribulose 1-phosphate = 5-methylsulfanyl-2,3-dioxopentyl phosphate + H2O. It functions in the pathway amino-acid biosynthesis; L-methionine biosynthesis via salvage pathway; L-methionine from S-methyl-5-thio-alpha-D-ribose 1-phosphate: step 2/6. Its function is as follows. Catalyzes the dehydration of methylthioribulose-1-phosphate (MTRu-1-P) into 2,3-diketo-5-methylthiopentyl-1-phosphate (DK-MTP-1-P). This chain is Methylthioribulose-1-phosphate dehydratase, found in Pseudomonas aeruginosa (strain ATCC 15692 / DSM 22644 / CIP 104116 / JCM 14847 / LMG 12228 / 1C / PRS 101 / PAO1).